A 414-amino-acid polypeptide reads, in one-letter code: Isocitrate dehydrogenase [NADP] cytoplasmic (414 aa).

Ser2 carries the N-acetylserine modification. Tyr42 bears the Phosphotyrosine mark. Residue 75–77 (TIT) coordinates NADP(+). Residue Thr77 coordinates substrate. At Lys81 the chain carries N6-acetyllysine. Position 82 (Arg82) interacts with NADP(+). Substrate-binding positions include 94–100 (SPNGTIR) and Arg109. Lys126 is subject to N6-succinyllysine. The substrate site is built by Arg132 and Lys212. Lys224 and Lys233 each carry N6-acetyllysine. Asp252 contacts Mn(2+). Position 260 (Lys260) interacts with NADP(+). Asp275 and Asp279 together coordinate Mn(2+). Residue 310-315 (GTVTRH) participates in NADP(+) binding. Residue Lys321 is modified to N6-acetyllysine. NADP(+) is bound at residue Asn328. Position 389 is a phosphoserine (Ser389). Lys400 carries the post-translational modification N6-succinyllysine.

The protein belongs to the isocitrate and isopropylmalate dehydrogenases family. As to quaternary structure, homodimer. Requires Mg(2+) as cofactor. The cofactor is Mn(2+). In terms of processing, acetylation at Lys-374 dramatically reduces catalytic activity. In terms of tissue distribution, expressed preferentially in corneal epithelium. Constitute approximately 13% of the total soluble bovine corneal epithelial proteins.

The protein localises to the cytoplasm. Its subcellular location is the cytosol. It catalyses the reaction D-threo-isocitrate + NADP(+) = 2-oxoglutarate + CO2 + NADPH. Functionally, catalyzes the NADP(+)-dependent oxidative decarboxylation of isocitrate (D-threo-isocitrate) to 2-ketoglutarate (2-oxoglutarate), which is required by other enzymes such as the phytanoyl-CoA dioxygenase. Plays a critical role in the generation of NADPH, an important cofactor in many biosynthesis pathways. May act as a corneal epithelial crystallin and may be involved in maintaining corneal epithelial transparency. The protein is Isocitrate dehydrogenase [NADP] cytoplasmic (IDH1) of Bos taurus (Bovine).